The chain runs to 104 residues: Large ribosomal subunit protein uL24 (104 aa).

It belongs to the universal ribosomal protein uL24 family. As to quaternary structure, part of the 50S ribosomal subunit.

One of two assembly initiator proteins, it binds directly to the 5'-end of the 23S rRNA, where it nucleates assembly of the 50S subunit. Functionally, one of the proteins that surrounds the polypeptide exit tunnel on the outside of the subunit. The chain is Large ribosomal subunit protein uL24 from Brevibacillus brevis (strain 47 / JCM 6285 / NBRC 100599).